The primary structure comprises 389 residues: N-terminal EF-hand calcium-binding protein 2 (389 aa).

An Omega-N-methylarginine modification is found at arginine 10. Asymmetric dimethylarginine is present on arginine 42. EF-hand domains lie at 63–98 (GGTA…GVLN) and 99–132 (EKEL…HMGD). Positions 76, 78, 80, 82, 87, 110, 112, 114, 116, and 121 each coordinate Ca(2+). Positions 173–198 (LKETANQIQSLLSSVESAVEAIEEQT) form a coiled coil. The 89-residue stretch at 289-377 (QLVRQEMAVC…LSQPEALSQI (89 aa)) folds into the ABM domain.

In terms of assembly, interacts (calcium-dependent) with ADORA2A and GRM5. As to expression, expressed in the iris, in the ciliary margin of the retina and in the inner portion of the neural retina. Expressed in the spinal dorsal horn with especially strong expression in lamina IIi; found in excitory synaptic boutons (at protein level).

Its subcellular location is the cytoplasm. It localises to the cell projection. The protein localises to the dendrite. The protein resides in the axon. It is found in the cell membrane. Its function is as follows. May act as a signaling scaffold protein that senses intracellular calcium. Can modulate ligand-induced internalization of ADORA2A and coupling efficiency of mGluR5/GRM5; for both receptors may regulate signaling activity such as promoting MAPK1/3 (ERK1/2) activation. The polypeptide is N-terminal EF-hand calcium-binding protein 2 (Necab2) (Mus musculus (Mouse)).